The primary structure comprises 305 residues: Glycine--tRNA ligase alpha subunit (305 aa).

The protein belongs to the class-II aminoacyl-tRNA synthetase family. Tetramer of two alpha and two beta subunits.

It is found in the cytoplasm. It carries out the reaction tRNA(Gly) + glycine + ATP = glycyl-tRNA(Gly) + AMP + diphosphate. The sequence is that of Glycine--tRNA ligase alpha subunit from Streptococcus pneumoniae (strain 70585).